The following is a 222-amino-acid chain: Pleckstrin homology domain-containing family B member 2 (222 aa).

Positions 2–109 (AFVKSGWLLR…WKFTLQDSRT (108 aa)) constitute a PH domain. Lysine 20 contributes to the a 1,2-diacyl-sn-glycero-3-phospho-L-serine binding site.

It is found in the recycling endosome membrane. Its function is as follows. Involved in retrograde transport of recycling endosomes. In Homo sapiens (Human), this protein is Pleckstrin homology domain-containing family B member 2 (PLEKHB2).